Consider the following 83-residue polypeptide: MAITKKNLIAFVFTILFVISYVHCRSTSDIVSGSGIKEDEHVCFKTSPCLPEVGGEKGCIAFCSRMKFTTGLCLGSVVCCCYT.

The N-terminal stretch at 1 to 24 is a signal peptide; it reads MAITKKNLIAFVFTILFVISYVHC. 4 disulfide bridges follow: Cys43/Cys81, Cys49/Cys73, Cys59/Cys79, and Cys63/Cys80.

This sequence belongs to the DEFL family.

It is found in the secreted. This Arabidopsis thaliana (Mouse-ear cress) protein is Putative defensin-like protein 110.